Consider the following 439-residue polypeptide: Methionine aminopeptidase 2-1 (439 aa).

The segment at 1–87 is disordered; sequence MSGGESRSPD…DKLFPSGNFP (87 aa). Positions 22 to 32 are enriched in acidic residues; that stretch reads GGDDEESDGDG. Basic residues predominate over residues 47–61; that stretch reads KKRKKRNKKKSKKKS. His190 contributes to the substrate binding site. Positions 211, 222, and 291 each coordinate a divalent metal cation. Residue His299 coordinates substrate. Positions 324 and 420 each coordinate a divalent metal cation.

The protein belongs to the peptidase M24A family. Methionine aminopeptidase eukaryotic type 2 subfamily. Co(2+) is required as a cofactor. Zn(2+) serves as cofactor. The cofactor is Mn(2+). It depends on Fe(2+) as a cofactor.

The protein localises to the cytoplasm. It catalyses the reaction Release of N-terminal amino acids, preferentially methionine, from peptides and arylamides.. Functionally, cotranslationally removes the N-terminal methionine from nascent proteins. The N-terminal methionine is often cleaved when the second residue in the primary sequence is small and uncharged (Met-Ala-, Cys, Gly, Pro, Ser, Thr, or Val). The polypeptide is Methionine aminopeptidase 2-1 (Chaetomium globosum (strain ATCC 6205 / CBS 148.51 / DSM 1962 / NBRC 6347 / NRRL 1970) (Soil fungus)).